Reading from the N-terminus, the 469-residue chain is Phosphoenolpyruvate carboxylase (469 aa).

It belongs to the PEPCase type 2 family. Homotetramer. Requires Mg(2+) as cofactor.

It carries out the reaction oxaloacetate + phosphate = phosphoenolpyruvate + hydrogencarbonate. Catalyzes the irreversible beta-carboxylation of phosphoenolpyruvate (PEP) to form oxaloacetate (OAA), a four-carbon dicarboxylic acid source for the tricarboxylic acid cycle. The chain is Phosphoenolpyruvate carboxylase from Pyrococcus abyssi (strain GE5 / Orsay).